The following is a 472-amino-acid chain: Ribosomal protein uS12 methylthiotransferase RimO (472 aa).

Positions 22–133 (PSVAFAHLGC…IVDVLKRVEA (112 aa)) constitute an MTTase N-terminal domain. Residues C31, C67, C96, C171, C175, and C178 each coordinate [4Fe-4S] cluster. The Radical SAM core domain maps to 157-386 (TTDQAVAYLK…MALQQPISAE (230 aa)). The TRAM domain maps to 389–460 (QRWVGRTIDV…VYDLTGQLVD (72 aa)).

The protein belongs to the methylthiotransferase family. RimO subfamily. Requires [4Fe-4S] cluster as cofactor.

It is found in the cytoplasm. It catalyses the reaction L-aspartate(89)-[ribosomal protein uS12]-hydrogen + (sulfur carrier)-SH + AH2 + 2 S-adenosyl-L-methionine = 3-methylsulfanyl-L-aspartate(89)-[ribosomal protein uS12]-hydrogen + (sulfur carrier)-H + 5'-deoxyadenosine + L-methionine + A + S-adenosyl-L-homocysteine + 2 H(+). In terms of biological role, catalyzes the methylthiolation of an aspartic acid residue of ribosomal protein uS12. The chain is Ribosomal protein uS12 methylthiotransferase RimO from Prochlorococcus marinus (strain MIT 9303).